The primary structure comprises 761 residues: ARF GTPase-activating protein GIT1 (761 aa).

In terms of domain architecture, Arf-GAP spans M1 to D124. The interaction with gamma-tubulin and localization to the centrosome stretch occupies residues M1 to D124. Residues C11–C34 form a C4-type zinc finger. ANK repeat units follow at residues D132 to F161, K166 to S195, and N199 to D228. Y224 bears the Phosphotyrosine mark. The interaction with PCLO stretch occupies residues H245 to D365. The interval D253–D415 is interaction with PTK2/FAK1. The interval S254–L367 is interaction with ARHGEF7. A disordered region spans residues R354–L416. Polar residues predominate over residues G357–Q374. A phosphoserine mark is found at S359 and S362. Phosphothreonine is present on T364. The interval N366–L587 is interaction with NCK2 and GRIN3A. A required for localization at synapses region spans residues N366–L587. Phosphoserine occurs at positions 370 and 375. Y383 carries the phosphotyrosine modification. A phosphoserine mark is found at S385 and S388. Residues S385–Q394 show a composition bias toward acidic residues. Position 392 is a phosphothreonine (T392). Phosphoserine occurs at positions 410, 413, and 417. The segment at M411 to A466 is interaction with MAPK1. An interaction with IKBKG region spans residues A420–K620. Residues V440 to P474 adopt a coiled-coil conformation. Residues L471–R501 form a disordered region. Over residues P474–P484 the composition is skewed to pro residues. T480 bears the Phosphothreonine mark. 2 positions are modified to phosphoserine: S498 and S536. T537 carries the post-translational modification Phosphothreonine. 2 positions are modified to phosphotyrosine: Y545 and Y554. Phosphoserine is present on residues S561, S571, S592, and S596. A disordered region spans residues P572–P606. The residue at position 601 (T601) is a Phosphothreonine. Position 630 is a phosphoserine (S630). The interaction with PXN and TGFB1I1 stretch occupies residues P637–Q761.

Forms homodimers and possibly oligomers. May forms heterooligomers with GIT2. Interacts with G protein-coupled receptor kinases, including GRK2, GRK3, GRK5 and GRK6. Interacts with PPFIA1, PPFIA2 and PPFIA4. Interacts with GRIP1 and forms a ternary complex with PPFIA1 and GRIP1. Directly interacts with ARHGEF7/beta-PIX, forming in vitro a heptameric complex made of a GIT1 dimer and an ARHGEF7 trimer. Directly interacts with PXN/paxillin; this interaction is enhanced in the presence of ARHGEF7. Directly interacts (via C-terminus) with TGFB1I1/Hic-5 (via LD motif 3). Directly interacts with PTK2/FAK1. May interact with PTK2B/PYK2; this interaction may be indirect. Interacts with AMPA receptors GRIA2/3. Directly interacts with protein Piccolo/PCLO. Forms a complex with Ephrin-B1/EFNB1 and NCK2/GRB4 (via SH2); this interaction is important for spine morphogenesis and synapse formation. Interaction with NCK2 is transient and depends upon GIT1 phosphorylation at Tyr-383. Interacts with GRIN3A/GluN3A (via C-terminus); this interaction competes with GIT1 interaction with ARHGEF7 and limits synaptic localization of GIT1. Interacts with IKBKG/NEMO in resting bone mesenchymal stem cells, as well as in TNF-stimulated cells; this interaction may increase IKBKG affinity for 'Lys-63'-linked polyubiquitin chains. Interacts with GABA(A) receptors, including GABRB3 and GABRG2. Interacts with SCRIB. Interacts (via N- and C-terminus) with ENTR1/SDCCAG3 (via N-terminus); this interaction is direct. May form a tripartite complex with ENTR1 and PTPN13. Interacts with YWHAZ. Interacts with PAK1. Interacts with PAK3. Directly interacts (via N-terminus) with gamma-tubulin. Interacts with MAPK1 and MAPK3; this interaction is required for MAPK1/3 recruitment to focal adhesions. Post-translationally, phosphorylated by PAK1. Phosphorylation on tyrosine residues may be catalyzed by PTK2/FAK1 and SRC in growing fibroblasts. Phosphorylation at Tyr-383 is induced by activation of Ephrin-B1/EFNB1 and catalyzed by SRC family kinases. It is required for the interaction with NCK2 and for GIT1 recruitment to synapses in hippocampal neurons.

It localises to the cytoplasm. It is found in the synapse. The protein resides in the presynapse. Its subcellular location is the postsynapse. The protein localises to the postsynaptic density. It localises to the cell junction. It is found in the focal adhesion. The protein resides in the cell projection. Its subcellular location is the lamellipodium. The protein localises to the cytoskeleton. It localises to the microtubule organizing center. It is found in the centrosome. The protein resides in the spindle pole. Its function is as follows. GTPase-activating protein for ADP ribosylation factor family members, including ARF1. Multidomain scaffold protein that interacts with numerous proteins and therefore participates in many cellular functions, including receptor internalization, focal adhesion remodeling, and signaling by both G protein-coupled receptors and tyrosine kinase receptors. Through PAK1 activation, positively regulates microtubule nucleation during interphase. Plays a role in the regulation of cytokinesis; for this function, may act in a pathway also involving ENTR1 and PTPN13. May promote cell motility both by regulating focal complex dynamics and by local activation of RAC1. May act as scaffold for MAPK1/3 signal transduction in focal adhesions. Recruits MAPK1/3/ERK1/2 to focal adhesions after EGF stimulation via a Src-dependent pathway, hence stimulating cell migration. Plays a role in brain development and function. Involved in the regulation of spine density and synaptic plasticity that is required for processes involved in learning. Plays an important role in dendritic spine morphogenesis and synapse formation. In hippocampal neurons, recruits guanine nucleotide exchange factors (GEFs), such as ARHGEF7/beta-PIX, to the synaptic membrane. These in turn locally activate RAC1, which is an essential step for spine morphogenesis and synapse formation. May contribute to the organization of presynaptic active zones through oligomerization and formation of a Piccolo/PCLO-based protein network, which includes ARHGEF7/beta-PIX and FAK1. In neurons, through its interaction with liprin-alpha family members, may be required for AMPA receptor (GRIA2/3) proper targeting to the cell membrane. In complex with GABA(A) receptors and ARHGEF7, plays a crucial role in regulating GABA(A) receptor synaptic stability, maintaining GPHN/gephyrin scaffolds and hence GABAergic inhibitory synaptic transmission, by locally coordinating RAC1 and PAK1 downstream effector activity, leading to F-actin stabilization. May also be important for RAC1 downstream signaling pathway through PAK3 and regulation of neuronal inhibitory transmission at presynaptic input. Required for successful bone regeneration during fracture healing. The function in intramembranous ossification may, at least partly, exerted by macrophages in which GIT1 is a key negative regulator of redox homeostasis, IL1B production, and glycolysis, acting through the ERK1/2/NRF2/NFE2L2 axis. May play a role in angiogenesis during fracture healing. In this process, may regulate activation of the canonical NF-kappa-B signal in bone mesenchymal stem cells by enhancing the interaction between NEMO and 'Lys-63'-ubiquitinated RIPK1/RIP1, eventually leading to enhanced production of VEGFA and others angiogenic factors. Essential for VEGF signaling through the activation of phospholipase C-gamma and ERK1/2, hence may control endothelial cell proliferation and angiogenesis. The protein is ARF GTPase-activating protein GIT1 (GIT1) of Homo sapiens (Human).